The following is a 309-amino-acid chain: Short-chain dehydrogenase/reductase ARMGADRAFT_1018437 (309 aa).

Residues K64, D86, and N113 each coordinate NADP(+). Residue S167 is the Proton donor of the active site. Residues Y196 and K200 each contribute to the NADP(+) site. Y196 (proton acceptor) is an active-site residue. K200 functions as the Lowers pKa of active site Tyr in the catalytic mechanism.

This sequence belongs to the short-chain dehydrogenases/reductases (SDR) family.

Its pathway is secondary metabolite biosynthesis. In terms of biological role, short-chain dehydrogenase/reductase, part of the gene cluster that mediates the biosynthesis of melleolides, a range of antifungal and phytotoxic polyketide derivatives composed of an orsellinic acid (OA) moiety esterified to various sesquiterpene alcohols. The first step in melleolides biosynthesis is performed by the delta(6)-protoilludene synthase PRO1 which catalyzes the cyclization of farnesyl diphosphate to protoilludene. The orsellinic acid synthase armB produces OA by condensing acetyl-CoA with 3 malonyl-CoA units in a three-round chain elongation reaction folowed by a C2-C7 ring closure. ArmB further catalyzes the trans-esterification of OA to the various sesquiterpene alcohols resulting from the hydroxylation of protoilludene. The melleolides cluster also includes 5 cytochrome P450 monooxygenases, 4 NAD(+)-dependent oxidoreductases, one flavin-dependent oxidoreductase, and one O-methyltransferase. The cytochrome P450 monooxygenases may be involved in protoilludene hydroxylation to elaborate melleolides with multiple alcohol groups, such as melleolide D, which carries alcohol functionalities at C-4, C-5, C-10, and C-13. The role of the NAD(+)-dependent enzymes remains unknown. Numerous melleolides, including arnamial, show 5'-O-methylation of the aromatic moiety which may be catalyzed by the methyltransferase encoded in the cluster. The flavin-dependent oxidoreductase might represent the dehydrogenase yielding the aldehyde in position 1 of arnamial and other melleolides. Finally, several halogenase localized outside of the cluster, are able to catalyze the transfer of a single chlorine atom to the melleolide backbone, resulting in a 6'-chloromelleolide product. The polypeptide is Short-chain dehydrogenase/reductase ARMGADRAFT_1018437 (Armillaria gallica (Bulbous honey fungus)).